The chain runs to 276 residues: Large ribosomal subunit protein uL2c (276 aa).

A disordered region spans residues 223 to 254; the sequence is VVKNPIDHPHGGGEGRSPIGRAKPVTPWGQPA.

The protein belongs to the universal ribosomal protein uL2 family. As to quaternary structure, part of the 50S ribosomal subunit.

It localises to the plastid. The protein resides in the chloroplast. This chain is Large ribosomal subunit protein uL2c (rpl2), found in Emiliania huxleyi (Coccolithophore).